Here is a 294-residue protein sequence, read N- to C-terminus: Acetylglutamate kinase (294 aa).

Residues 66–67 (GG), R88, and N193 contribute to the substrate site.

It belongs to the acetylglutamate kinase family. ArgB subfamily.

It localises to the cytoplasm. It carries out the reaction N-acetyl-L-glutamate + ATP = N-acetyl-L-glutamyl 5-phosphate + ADP. It functions in the pathway amino-acid biosynthesis; L-arginine biosynthesis; N(2)-acetyl-L-ornithine from L-glutamate: step 2/4. Its function is as follows. Catalyzes the ATP-dependent phosphorylation of N-acetyl-L-glutamate. The sequence is that of Acetylglutamate kinase from Agrobacterium fabrum (strain C58 / ATCC 33970) (Agrobacterium tumefaciens (strain C58)).